Here is a 76-residue protein sequence, read N- to C-terminus: Small ribosomal subunit protein uS17 (76 aa).

The protein belongs to the universal ribosomal protein uS17 family. In terms of assembly, part of the 30S ribosomal subunit.

In terms of biological role, one of the primary rRNA binding proteins, it binds specifically to the 5'-end of 16S ribosomal RNA. This is Small ribosomal subunit protein uS17 from Ruegeria sp. (strain TM1040) (Silicibacter sp.).